Here is a 469-residue protein sequence, read N- to C-terminus: Neuraminidase (469 aa).

Residues 1–9 are Intravirion-facing; that stretch reads MNPNQKIIT. The chain crosses the membrane as a helical span at residues 10–30; that stretch reads IGSVSLTIATVCFLMQIAILV. Residues 11–33 form an involved in apical transport and lipid raft association region; it reads GSVSLTIATVCFLMQIAILVTTV. The Virion surface portion of the chain corresponds to 31–469; sequence TTVTLHFRQY…DGADINLMPI (439 aa). The interval 36–88 is hypervariable stalk region; it reads HFRQYECDSPANNQVMPCEPTIIERNITEIVYLNNTTIEKEICPKLVEYRNWS. 4 N-linked (GlcNAc...) asparagine; by host glycosylation sites follow: Asn61, Asn69, Asn70, and Asn86. The tract at residues 91–469 is head of neuraminidase; it reads QCKITGFAPF…DGADINLMPI (379 aa). Disulfide bonds link Cys92-Cys417, Cys124-Cys129, Cys183-Cys230, Cys232-Cys237, Cys278-Cys291, Cys280-Cys289, Cys318-Cys337, and Cys421-Cys447. Position 118 (Arg118) interacts with substrate. N-linked (GlcNAc...) asparagine; by host glycosylation is present at Asn146. Asp151 functions as the Proton donor/acceptor in the catalytic mechanism. Substrate is bound at residue Arg152. N-linked (GlcNAc...) asparagine; by host glycans are attached at residues Asn200 and Asn234. 276-277 provides a ligand contact to substrate; that stretch reads EE. Arg292 serves as a coordination point for substrate. The Ca(2+) site is built by Asp293, Gly297, and Asp324. The interval 323–350 is disordered; it reads GDTPRNNDRSSNSNCRNPNNERGNHGVK. Residues 331-343 show a composition bias toward low complexity; it reads RSSNSNCRNPNNE. Arg371 serves as a coordination point for substrate. The N-linked (GlcNAc...) asparagine; by host glycan is linked to Asn402. The Nucleophile role is filled by Tyr406.

Belongs to the glycosyl hydrolase 34 family. Homotetramer. The cofactor is Ca(2+). N-glycosylated.

It localises to the virion membrane. The protein localises to the host apical cell membrane. The enzyme catalyses Hydrolysis of alpha-(2-&gt;3)-, alpha-(2-&gt;6)-, alpha-(2-&gt;8)- glycosidic linkages of terminal sialic acid residues in oligosaccharides, glycoproteins, glycolipids, colominic acid and synthetic substrates.. With respect to regulation, inhibited by the neuraminidase inhibitors zanamivir (Relenza) and oseltamivir (Tamiflu). These drugs interfere with the release of progeny virus from infected cells and are effective against all influenza strains. Resistance to neuraminidase inhibitors is quite rare. Catalyzes the removal of terminal sialic acid residues from viral and cellular glycoconjugates. Cleaves off the terminal sialic acids on the glycosylated HA during virus budding to facilitate virus release. Additionally helps virus spread through the circulation by further removing sialic acids from the cell surface. These cleavages prevent self-aggregation and ensure the efficient spread of the progeny virus from cell to cell. Otherwise, infection would be limited to one round of replication. Described as a receptor-destroying enzyme because it cleaves a terminal sialic acid from the cellular receptors. May facilitate viral invasion of the upper airways by cleaving the sialic acid moieties on the mucin of the airway epithelial cells. Likely to plays a role in the budding process through its association with lipid rafts during intracellular transport. May additionally display a raft-association independent effect on budding. Plays a role in the determination of host range restriction on replication and virulence. Sialidase activity in late endosome/lysosome traffic seems to enhance virus replication. The protein is Neuraminidase of Aves (Human).